The following is a 326-amino-acid chain: tRNA-modifying protein YgfZ (326 aa).

Residues Trp27 and Trp189 each coordinate folate.

It belongs to the tRNA-modifying YgfZ family.

The protein resides in the cytoplasm. Folate-binding protein involved in regulating the level of ATP-DnaA and in the modification of some tRNAs. It is probably a key factor in regulatory networks that act via tRNA modification, such as initiation of chromosomal replication. The protein is tRNA-modifying protein YgfZ of Shigella dysenteriae serotype 1 (strain Sd197).